The following is a 334-amino-acid chain: N-acetyl-gamma-glutamyl-phosphate reductase (334 aa).

The active site involves cysteine 154.

This sequence belongs to the NAGSA dehydrogenase family. Type 1 subfamily.

The protein resides in the cytoplasm. It carries out the reaction N-acetyl-L-glutamate 5-semialdehyde + phosphate + NADP(+) = N-acetyl-L-glutamyl 5-phosphate + NADPH + H(+). It participates in amino-acid biosynthesis; L-arginine biosynthesis; N(2)-acetyl-L-ornithine from L-glutamate: step 3/4. Functionally, catalyzes the NADPH-dependent reduction of N-acetyl-5-glutamyl phosphate to yield N-acetyl-L-glutamate 5-semialdehyde. In Buchnera aphidicola subsp. Acyrthosiphon pisum (strain 5A), this protein is N-acetyl-gamma-glutamyl-phosphate reductase.